The chain runs to 152 residues: Actin-depolymerizing factor 2, isoform c (152 aa).

The ADF-H domain occupies 4–147 (GVKVDPSCKN…DEKSVKSDLM (144 aa)).

Belongs to the actin-binding proteins ADF family.

In terms of biological role, depolymerizes growing actin filaments in muscle cells; required for the assembly of actin filaments into the functional contractile myofilament lattice of muscle. This Caenorhabditis elegans protein is Actin-depolymerizing factor 2, isoform c.